A 386-amino-acid chain; its full sequence is Lipoyl synthase, mitochondrial (386 aa).

The [4Fe-4S] cluster site is built by Cys115, Cys120, Cys126, Cys146, Cys150, Cys153, and Ser362. The region spanning 131 to 351 is the Radical SAM core domain; the sequence is ETGTATATIM…QKLGMEMGFR (221 aa).

This sequence belongs to the radical SAM superfamily. Lipoyl synthase family. The cofactor is [4Fe-4S] cluster.

It localises to the mitochondrion. It catalyses the reaction [[Fe-S] cluster scaffold protein carrying a second [4Fe-4S](2+) cluster] + N(6)-octanoyl-L-lysyl-[protein] + 2 oxidized [2Fe-2S]-[ferredoxin] + 2 S-adenosyl-L-methionine + 4 H(+) = [[Fe-S] cluster scaffold protein] + N(6)-[(R)-dihydrolipoyl]-L-lysyl-[protein] + 4 Fe(3+) + 2 hydrogen sulfide + 2 5'-deoxyadenosine + 2 L-methionine + 2 reduced [2Fe-2S]-[ferredoxin]. It functions in the pathway protein modification; protein lipoylation via endogenous pathway; protein N(6)-(lipoyl)lysine from octanoyl-[acyl-carrier-protein]: step 2/2. Its function is as follows. Catalyzes the radical-mediated insertion of two sulfur atoms into the C-6 and C-8 positions of the octanoyl moiety bound to the lipoyl domains of lipoate-dependent enzymes, thereby converting the octanoylated domains into lipoylated derivatives. The polypeptide is Lipoyl synthase, mitochondrial (Picea sitchensis (Sitka spruce)).